A 308-amino-acid chain; its full sequence is Tryptophan 2,3-dioxygenase (308 aa).

Positions 1–35 (MQPPGDNAPAGCPFSGAHAAQPAHEAPHVPGDAAG) are disordered. Residues 17 to 30 (AHAAQPAHEAPHVP) show a composition bias toward low complexity. Substrate is bound by residues 77–81 (FIIQH), Tyr-139, and Arg-143. Residue His-266 coordinates heme. Position 280 (Thr-280) interacts with substrate.

This sequence belongs to the tryptophan 2,3-dioxygenase family. In terms of assembly, homotetramer. Heme serves as cofactor.

The catalysed reaction is L-tryptophan + O2 = N-formyl-L-kynurenine. Its pathway is amino-acid degradation; L-tryptophan degradation via kynurenine pathway; L-kynurenine from L-tryptophan: step 1/2. In terms of biological role, heme-dependent dioxygenase that catalyzes the oxidative cleavage of the L-tryptophan (L-Trp) pyrrole ring and converts L-tryptophan to N-formyl-L-kynurenine. Catalyzes the oxidative cleavage of the indole moiety. The sequence is that of Tryptophan 2,3-dioxygenase from Burkholderia ambifaria (strain ATCC BAA-244 / DSM 16087 / CCUG 44356 / LMG 19182 / AMMD) (Burkholderia cepacia (strain AMMD)).